Reading from the N-terminus, the 404-residue chain is Serine/threonine transporter SstT (404 aa).

9 helical membrane passes run 12-32, 53-73, 81-101, 140-160, 177-197, 216-236, 287-307, 329-349, and 356-376; these read GGNL…LALV, AIAP…KEVG, ILVM…VLSF, ALAN…GIAL, AVSF…FGLV, LGVL…LIVF, VAIP…VTVL, IVAS…LLLI, and FNIP…IGVI.

It belongs to the dicarboxylate/amino acid:cation symporter (DAACS) (TC 2.A.23) family.

It is found in the cell inner membrane. It carries out the reaction L-serine(in) + Na(+)(in) = L-serine(out) + Na(+)(out). The catalysed reaction is L-threonine(in) + Na(+)(in) = L-threonine(out) + Na(+)(out). Involved in the import of serine and threonine into the cell, with the concomitant import of sodium (symport system). The chain is Serine/threonine transporter SstT from Actinobacillus pleuropneumoniae serotype 7 (strain AP76).